Consider the following 293-residue polypeptide: Protease HtpX (293 aa).

2 helical membrane passes run 4-24 and 34-54; these read IALF…VLSL and GLMI…LLMS. His139 is a Zn(2+) binding site. The active site involves Glu140. His143 lines the Zn(2+) pocket. 2 helical membrane-spanning segments follow: residues 158-178 and 193-213; these read VVNT…AGFM and LIYF…ASII. Glu222 provides a ligand contact to Zn(2+).

This sequence belongs to the peptidase M48B family. Zn(2+) is required as a cofactor.

Its subcellular location is the cell inner membrane. The chain is Protease HtpX from Escherichia coli O127:H6 (strain E2348/69 / EPEC).